The following is a 327-amino-acid chain: GMP reductase (327 aa).

Cysteine 176 acts as the Thioimidate intermediate in catalysis. 205–228 (IIADGGIRTHGDIAKSIRFGASMV) contributes to the NADP(+) binding site.

The protein belongs to the IMPDH/GMPR family. GuaC type 2 subfamily.

The catalysed reaction is IMP + NH4(+) + NADP(+) = GMP + NADPH + 2 H(+). In terms of biological role, catalyzes the irreversible NADPH-dependent deamination of GMP to IMP. It functions in the conversion of nucleobase, nucleoside and nucleotide derivatives of G to A nucleotides, and in maintaining the intracellular balance of A and G nucleotides. The polypeptide is GMP reductase (Streptococcus pyogenes serotype M6 (strain ATCC BAA-946 / MGAS10394)).